We begin with the raw amino-acid sequence, 149 residues long: Transcriptional repressor NrdR (149 aa).

The segment at 3–34 is a zinc-finger region; it reads CPFCDTEETKVIDSRLVSDGYQVRRRRECGHC. An ATP-cone domain is found at 49–139; it reads PKIIKTDGTR…VYLSFDDIDQ (91 aa).

It belongs to the NrdR family. Zn(2+) is required as a cofactor.

Negatively regulates transcription of bacterial ribonucleotide reductase nrd genes and operons by binding to NrdR-boxes. This is Transcriptional repressor NrdR from Haemophilus influenzae (strain PittEE).